The sequence spans 494 residues: SNF1-related protein kinase catalytic subunit alpha KIN12 (494 aa).

The 252-residue stretch at 19–270 (YRIGKTLGHG…ITEIRQHPWF (252 aa)) folds into the Protein kinase domain. Residues 25–33 (LGHGSFAKV) and lysine 48 contribute to the ATP site. Catalysis depends on aspartate 142, which acts as the Proton acceptor. Threonine 175 carries the post-translational modification Phosphothreonine. The auto-inhibitory domain (AID) stretch occupies residues 289–386 (AKKIEEEIIQ…GLKSNVKDDK (98 aa)). The 41-residue stretch at 291 to 331 (KIEEEIIQNVVNIGFDRNHVVDSLANRIQNEATVAYHLILD) folds into the UBA domain. Residues 293–494 (EEEIIQNVVN…VAFLRELGVL (202 aa)) form a regulatory domain (RD) region. The segment at 387-494 (TWTLGLQSQG…VAFLRELGVL (108 aa)) is PPI. One can recognise a KA1 domain in the interval 445 to 493 (AIILPTVIKFEIQLYKVREGKYLLDILRIDGPQFIFFDLCVAFLRELGV).

It belongs to the protein kinase superfamily. CAMK Ser/Thr protein kinase family. SNF1 subfamily. In terms of assembly, subunit of a probable heterotrimeric complex consisting of an alpha catalytic subunit, and a beta (KINB) and a gamma (KING or SNF4) non-catalytic regulatory subunits. Autophosphorylated. As to expression, expressed at very low levels.

The catalysed reaction is L-seryl-[protein] + ATP = O-phospho-L-seryl-[protein] + ADP + H(+). It catalyses the reaction L-threonyl-[protein] + ATP = O-phospho-L-threonyl-[protein] + ADP + H(+). With respect to regulation, activated by phosphorylation at Thr-175. Functionally, catalytic subunit of the probable trimeric SNF1-related protein kinase (SnRK) complex, a central regulator of cellular energy homeostasis, which, in response to seemingly unrelated darkness, sugar and stress conditions, activates energy-producing pathways and inhibits energy-consuming processes. May also be involved in the regulation of fatty acid synthesis by phosphorylation of acetyl-CoA carboxylase and in assimilation of nitrogen by phosphorylating nitrate reductase. The sequence is that of SNF1-related protein kinase catalytic subunit alpha KIN12 from Arabidopsis thaliana (Mouse-ear cress).